The sequence spans 395 residues: Aurora kinase A (395 aa).

Residues 1–114 (MDRCKENCVS…QASLQKTEDT (114 aa)) form a disordered region. 2 stretches are compositionally biased toward polar residues: residues 29–60 (QIPSQNLGSASSGQAQRVLCPSNSQRVPSQAQ) and 84–99 (RLNNPQKNEQPAASGN). A phosphoserine mark is found at Ser-40 and Ser-50. Positions 100 to 114 (DSEKEQASLQKTEDT) are enriched in basic and acidic residues. One can recognise a Protein kinase domain in the interval 124-374 (FDIGRPLGKG…LAEVLEHPWI (251 aa)). Residues Lys-134, Lys-153, and 201-204 (LEYA) contribute to the ATP site. The active-site Proton acceptor is the Asp-247. Lys-249 participates in a covalent cross-link: Glycyl lysine isopeptide (Lys-Gly) (interchain with G-Cter in SUMO2). ATP contacts are provided by residues 251–252 (EN) and Asp-265. The interval 271–284 (HAPSSRRTTMCGTL) is activation segment. Phosphothreonine occurs at positions 278 and 279. Ser-333 carries the post-translational modification Phosphoserine; by PKA and PAK. Residues 376–385 (ANSSKPPTGH) are compositionally biased toward polar residues. The disordered stretch occupies residues 376–395 (ANSSKPPTGHTSKEPTSKSS). A compositionally biased stretch (basic and acidic residues) spans 386–395 (TSKEPTSKSS).

The protein belongs to the protein kinase superfamily. Ser/Thr protein kinase family. Aurora subfamily. In terms of assembly, part of a complex composed of NEDD9, AURKA and CTTN; within the complex NEDD9 acts as a scaffold protein and is required for complex formation. Identified in a complex with AUNIP and NIN. Interacts with CPEB1, JTB, TACC1, TPX2, PPP2CA, as well as with the protein phosphatase type 1 (PP1) isoforms PPP1CA, PPP1CB and PPP1CC. Also interacts with its substrates ARHGEF2, BORA, KIF2A, PARD3, and p53/TP53. Interaction with BORA promotes phosphorylation of PLK1. Interacts with GADD45A, competing with its oligomerization. Interacts with FBXL7 and CIMAP3. Interacts (via C-terminus) with AUNIP (via C-terminus). Interacts with SIRT2. Interacts with FRY; this interaction facilitates AURKA-mediated PLK1 phosphorylation. Interacts with MYCN; interaction is phospho-independent and triggers AURKA activation; AURKA competes with FBXW7 for binding to unphosphorylated MYCN but not for binding to phosphorylated MYCN. Interacts with HNRNPU. Interacts with AAAS. Interacts with KLHL18 and CUL3. Interacts with FOXP1. Interacts with HDAC6; AURKA-mediated phosphorylation of HDAC6 promotes deacetylation of alpha-tubulin. In terms of processing, activated by phosphorylation at Thr-279; this brings about a change in the conformation of the activation segment. Phosphorylation at Thr-279 varies during the cell cycle and is highest during M phase. Autophosphorylated at Thr-279 upon TPX2 binding. Thr-279 can be phosphorylated by several kinases, including PAK and PKA. Protein phosphatase type 1 (PP1) binds AURKA and inhibits its activity by dephosphorylating Thr-279 during mitosis. Phosphorylation at Ser-333 decreases the kinase activity. PPP2CA controls degradation by dephosphorylating Ser-52 at the end of mitosis. Ubiquitinated by the anaphase-promoting complex (APC), leading to its degradation by the proteasome. Ubiquitinated by CHFR, leading to its degradation by the proteasome. Ubiquitinated by the E3 ubiquitin-protein ligase complex SCF(FBXL7) during mitosis, leading to its degradation by the proteasome. As to expression, detected in embryonic neurons in dorsal root ganglia and brain cortex (at protein level). Highly expressed in testis, in about one third of the seminiferous tubules. Expression is restricted to specific spermatocytes nearing completion of prophase, with levels falling off on transition to elongated spermatids. Highly expressed in the ovary, expression in the oocyte starts around the transition to large growing follicle. Abundant expression is seen in the proliferating granulosa and thecal cells of the growing follicle, and in the young corpus luteum. Very weakly expressed in spleen and intestine.

The protein resides in the cytoplasm. The protein localises to the cytoskeleton. Its subcellular location is the microtubule organizing center. It localises to the centrosome. It is found in the spindle pole. The protein resides in the centriole. The protein localises to the cell projection. Its subcellular location is the neuron projection. It localises to the cilium. It is found in the cilium basal body. The protein resides in the basolateral cell membrane. It carries out the reaction L-seryl-[protein] + ATP = O-phospho-L-seryl-[protein] + ADP + H(+). It catalyses the reaction L-threonyl-[protein] + ATP = O-phospho-L-threonyl-[protein] + ADP + H(+). With respect to regulation, activation of CDK1, appears to be an upstream event of AURKA activation. Phosphatase inhibitor-2 (PPP1R2) and TPX2 act also as activators. Inactivated by the G2 checkpoint. Inhibited by GADD45A and p53/TP53, and through dephosphorylation by protein phosphatase type 1 (PP1). MLN8054 is also a potent and selective inhibitor. Activated during the early phase of cilia disassembly in the presence of CIMAP3. Inhibited by the small molecule inhibitor VX-680. Its function is as follows. Mitotic serine/threonine kinase that contributes to the regulation of cell cycle progression. Associates with the centrosome and the spindle microtubules during mitosis and plays a critical role in various mitotic events including the establishment of mitotic spindle, centrosome duplication, centrosome separation as well as maturation, chromosomal alignment, spindle assembly checkpoint, and cytokinesis. Required for normal spindle positioning during mitosis and for the localization of NUMA1 and DCTN1 to the cell cortex during metaphase. Required for initial activation of CDK1 at centrosomes. Phosphorylates numerous target proteins, including ARHGEF2, BORA, BRCA1, CDC25B, DLGP5, HDAC6, KIF2A, LATS2, NDEL1, PARD3, PPP1R2, PLK1, RASSF1, TACC3, p53/TP53 and TPX2. Phosphorylates MCRS1 which is required for MCRS1-mediated kinetochore fiber assembly and mitotic progression. Regulates KIF2A tubulin depolymerase activity. Required for normal axon formation. Plays a role in microtubule remodeling during neurite extension. Important for microtubule formation and/or stabilization. Also acts as a key regulatory component of the p53/TP53 pathway, and particularly the checkpoint-response pathways critical for oncogenic transformation of cells, by phosphorylating and destabilizing p53/TP53. Phosphorylates its own inhibitors, the protein phosphatase type 1 (PP1) isoforms, to inhibit their activity. Inhibits cilia outgrowth. Required for cilia disassembly via phosphorylation of HDAC6 and subsequent deacetylation of alpha-tubulin. Regulates protein levels of the anti-apoptosis protein BIRC5 by suppressing the expression of the SCF(FBXL7) E3 ubiquitin-protein ligase substrate adapter FBXL7 through the phosphorylation of the transcription factor FOXP1. This chain is Aurora kinase A (Aurka), found in Mus musculus (Mouse).